Here is a 271-residue protein sequence, read N- to C-terminus: PA-phosphatase related-family protein DDB_G0284367 (271 aa).

Transmembrane regions (helical) follow at residues 23-43 (FLCL…IPPF), 68-88 (IVPV…VFIG), 102-122 (AALG…ILKV), 150-170 (FPSG…FYLC), 181-201 (GNIL…LVAV), and 211-231 (FSDI…VYFM).

The protein belongs to the PA-phosphatase related phosphoesterase family.

The protein localises to the membrane. This Dictyostelium discoideum (Social amoeba) protein is PA-phosphatase related-family protein DDB_G0284367.